The following is a 1122-amino-acid chain: Protein phosphatase 1 regulatory subunit 3A (1122 aa).

The segment at 32-58 (TFQPGFSPQPSRRGSDSSEDIYLDTPS) is disordered. S38 and S42 each carry phosphoserine; by GSK3. S46 carries the post-translational modification Phosphoserine; by PKA and ISPK. S49 is modified (phosphoserine). Phosphothreonine is present on T56. Positions 62-65 (RRVS) match the PP1-binding motif motif. S65 carries the post-translational modification Phosphoserine; by PKA. One can recognise a CBM21 domain in the interval 122–230 (QLQIQKAILE…NNNGTNYTFI (109 aa)). Disordered regions lie at residues 332-351 (STASRDERNTFSTDPVNFPN), 395-422 (SSGDDCTHQPSEETTSNMGEIKPSLGDT), 496-516 (CLKESTEEGSSKEDYYGNGKD), and 640-668 (GINSEDQDNSPQHKQSWNVLESQGKSREN). Basic and acidic residues-rich tracts occupy residues 395 to 405 (SSGDDCTHQPS) and 499 to 516 (ESTEEGSSKEDYYGNGKD). Polar residues predominate over residues 640–662 (GINSEDQDNSPQHKQSWNVLESQ). At S844 the chain carries Phosphoserine. Over residues 963 to 977 (IEKHPYPESKPEEVS) the composition is skewed to basic and acidic residues. Disordered regions lie at residues 963–983 (IEKHPYPESKPEEVSRSSGIV) and 1025–1058 (RHENEGLVSSGQSLYTSGEKESDSSASTSLPVEE). Composition is skewed to polar residues over residues 1031–1040 (LVSSGQSLYT) and 1048–1058 (SSASTSLPVEE). Residues 1078 to 1098 (YFLLFLIFLITVYHYDLMIGL) traverse the membrane as a helical segment.

Interacts with PPP1CC catalytic subunit of PP1, and associates with glycogen. Post-translationally, phosphorylation at Ser-46 by ISPK stimulates the dephosphorylation of glycogen synthase and phosphorylase kinase. In terms of tissue distribution, skeletal muscle and heart.

The protein resides in the membrane. Functionally, seems to act as a glycogen-targeting subunit for PP1. PP1 is essential for cell division, and participates in the regulation of glycogen metabolism, muscle contractility and protein synthesis. Plays an important role in glycogen synthesis but is not essential for insulin activation of glycogen synthase. The polypeptide is Protein phosphatase 1 regulatory subunit 3A (PPP1R3A) (Homo sapiens (Human)).